The chain runs to 231 residues: uncharacterized protein (231 aa).

The segment covering 1-10 has biased composition (basic and acidic residues); the sequence is MDGKKREVEN. Residues 1–35 are disordered; it reads MDGKKREVENGKNGNNIKDGNSSNTTNYGKDTKTT. Residues 11–24 show a composition bias toward low complexity; that stretch reads GKNGNNIKDGNSSN. Positions 25–35 are enriched in polar residues; that stretch reads TTNYGKDTKTT.

This is an uncharacterized protein from Aquifex aeolicus (strain VF5).